The chain runs to 780 residues: MADVESAGVDDSFAQSEPHDEQQIHNMTVGTRRQPNGTIGSVYSGNKIRHLKKEDGIPLWRKDIQYQFLKLVFEDKTPVFTRWPDGQKNMDFADIYIDAMARSSKTSKILKDKLQSDKQAAINMAMVCLLVNFGRMNTTLNFFPEMRAQLRTYHSIPSLQAHQDPNAYKQLQDAPRLKSILKGASEDVDQPNTLDKIKRENVPRTNPVNLIFVLAQYAPKVSEMHFFPPRDFFDLVMRSTLSSKSRAKAFLWLMWWYLESDFSREAALNNPFGPGLEGEGTGGLPIKVPSFEILTEEQANEENVDTQSEIEYGEEKRLERKRILEEEEPTPRAPKRPKKMPYWEFQYLKQMEPGTKIPSRQFSNKGDAYRAAADSDDLIEFRNPDGSIRSTLKMPRDEDYAYQSGSLDGPSPRIVLRTKAENTPDAASPAPPGSGYPILNRFVTEASPHHQGSSRRPRPLTQHQLAVERNRRQRIEYILAKRKGEAYRLLRAKRLTEIPFARYGRLLQNLPDGYDTDDDKSWGKGGLLPNPEEEEDFGECANYFLSVIRKASRRLDRWDYEHANGPRRDRKKEREERQKAREEAMDFDGDVDGKVSSRSSRARAQRNAKRKLARAAAAASSTPSASTPKTAAARSKGNRSRNPRDEKVAAATSLGANTGLETPSRDDALSPVQGDLEGEESLDDIDRELLGEGSGDEDDIPPRGLEPSRPAELGYDDSFLGGDADDALSSDEEEEEAEDEELDEMDVEGDDNLSAPGGEGRYAASDVSGPEMANGKPGWN.

Disordered regions lie at residues 1-25 (MADV…QQIH) and 563-780 (ANGP…PGWN). Basic and acidic residues predominate over residues 563–584 (ANGPRRDRKKEREERQKAREEA). A compositionally biased stretch (basic residues) spans 600–613 (SRARAQRNAKRKLA). Residues 614–635 (RAAAAASSTPSASTPKTAAARS) are compositionally biased toward low complexity. Composition is skewed to acidic residues over residues 676 to 686 (LEGEESLDDID) and 723 to 751 (DADD…EGDD).

Component of the chromatin-remodeling INO80 complex.

The protein localises to the nucleus. Its function is as follows. Probably involved in transcription regulation via its interaction with the INO80 complex, a chromatin-remodeling complex. The protein is Ino eighty subunit 1 of Emericella nidulans (strain FGSC A4 / ATCC 38163 / CBS 112.46 / NRRL 194 / M139) (Aspergillus nidulans).